A 425-amino-acid chain; its full sequence is Serine--tRNA ligase (425 aa).

233–235 (TAE) is a binding site for L-serine. 264-266 (RRE) provides a ligand contact to ATP. Position 287 (Glu287) interacts with L-serine. Residue 351–354 (EISS) coordinates ATP. Ser385 is a binding site for L-serine.

Belongs to the class-II aminoacyl-tRNA synthetase family. Type-1 seryl-tRNA synthetase subfamily. Homodimer. The tRNA molecule binds across the dimer.

The protein resides in the cytoplasm. The catalysed reaction is tRNA(Ser) + L-serine + ATP = L-seryl-tRNA(Ser) + AMP + diphosphate + H(+). It catalyses the reaction tRNA(Sec) + L-serine + ATP = L-seryl-tRNA(Sec) + AMP + diphosphate + H(+). It functions in the pathway aminoacyl-tRNA biosynthesis; selenocysteinyl-tRNA(Sec) biosynthesis; L-seryl-tRNA(Sec) from L-serine and tRNA(Sec): step 1/1. Catalyzes the attachment of serine to tRNA(Ser). Is also able to aminoacylate tRNA(Sec) with serine, to form the misacylated tRNA L-seryl-tRNA(Sec), which will be further converted into selenocysteinyl-tRNA(Sec). The polypeptide is Serine--tRNA ligase (Parasynechococcus marenigrum (strain WH8102)).